The primary structure comprises 475 residues: Sulfate adenylyltransferase subunit 1 (475 aa).

Positions 25–239 (KSLLRFLTCG…EVLETVEIQR (215 aa)) constitute a tr-type G domain. A G1 region spans residues 34 to 41 (GSVDDGKS). Residue 34–41 (GSVDDGKS) participates in GTP binding. Positions 92–96 (GITID) are G2. The segment at 113–116 (DTPG) is G3. GTP is bound by residues 113–117 (DTPGH) and 168–171 (NKMD). Residues 168–171 (NKMD) form a G4 region. Positions 206–208 (SAL) are G5.

Belongs to the TRAFAC class translation factor GTPase superfamily. Classic translation factor GTPase family. CysN/NodQ subfamily. As to quaternary structure, heterodimer composed of CysD, the smaller subunit, and CysN.

It catalyses the reaction sulfate + ATP + H(+) = adenosine 5'-phosphosulfate + diphosphate. It functions in the pathway sulfur metabolism; hydrogen sulfide biosynthesis; sulfite from sulfate: step 1/3. Functionally, with CysD forms the ATP sulfurylase (ATPS) that catalyzes the adenylation of sulfate producing adenosine 5'-phosphosulfate (APS) and diphosphate, the first enzymatic step in sulfur assimilation pathway. APS synthesis involves the formation of a high-energy phosphoric-sulfuric acid anhydride bond driven by GTP hydrolysis by CysN coupled to ATP hydrolysis by CysD. In Escherichia coli O157:H7, this protein is Sulfate adenylyltransferase subunit 1.